A 555-amino-acid chain; its full sequence is Glutamine--tRNA ligase (555 aa).

A 'HIGH' region motif is present at residues 34 to 44 (PEPNGYLHIGH). ATP-binding positions include 35 to 37 (EPN) and 41 to 47 (HIGHAKS). L-glutamine contacts are provided by D67 and Y212. ATP is bound by residues T231, 261-262 (RL), and 269-271 (MSK). The 'KMSKS' region motif lies at 268–272 (IMSKR).

This sequence belongs to the class-I aminoacyl-tRNA synthetase family. In terms of assembly, monomer.

The protein resides in the cytoplasm. It carries out the reaction tRNA(Gln) + L-glutamine + ATP = L-glutaminyl-tRNA(Gln) + AMP + diphosphate. In Yersinia enterocolitica serotype O:8 / biotype 1B (strain NCTC 13174 / 8081), this protein is Glutamine--tRNA ligase.